Reading from the N-terminus, the 299-residue chain is Cuticle collagen 34 (299 aa).

A disordered region spans residues 105 to 282 (PGPAGTPGKP…GSPGERGICP (178 aa)). Residues 129–162 (PGRPPQQPCEPITPPPCKPCPQGPPGPPGPPGPP) show a composition bias toward pro residues. Over residues 164 to 181 (DSGEPGSPGLPGQDAAPG) the composition is skewed to low complexity. 2 stretches are compositionally biased toward pro residues: residues 182–195 (EPGP…PGAP) and 215–233 (PGEP…PGSP). Positions 216–278 (GEPGPPGEAG…AGPPGSPGER (63 aa)) are triple-helical region. Positions 251–263 (NGPDGQPGADGNP) are enriched in low complexity. Positions 265–274 (APGPAGPPGS) are enriched in pro residues.

The protein belongs to the cuticular collagen family. In terms of assembly, collagen polypeptide chains are complexed within the cuticle by disulfide bonds and other types of covalent cross-links.

In terms of biological role, nematode cuticles are composed largely of collagen-like proteins. The cuticle functions both as an exoskeleton and as a barrier to protect the worm from its environment. The sequence is that of Cuticle collagen 34 (col-34) from Caenorhabditis elegans.